The chain runs to 66 residues: Large ribosomal subunit protein bL35 (66 aa).

Basic residues predominate over residues 1-24 (MPKQKTHRGAAKRFKKTGSGKLKR). Residues 1 to 26 (MPKQKTHRGAAKRFKKTGSGKLKRDH) are disordered.

This sequence belongs to the bacterial ribosomal protein bL35 family.

The chain is Large ribosomal subunit protein bL35 from Bacillus cytotoxicus (strain DSM 22905 / CIP 110041 / 391-98 / NVH 391-98).